Reading from the N-terminus, the 168-residue chain is Peptide deformylase (168 aa).

Fe cation contacts are provided by Cys-92 and His-134. Glu-135 is a catalytic residue. His-138 contacts Fe cation.

This sequence belongs to the polypeptide deformylase family. Requires Fe(2+) as cofactor.

It catalyses the reaction N-terminal N-formyl-L-methionyl-[peptide] + H2O = N-terminal L-methionyl-[peptide] + formate. In terms of biological role, removes the formyl group from the N-terminal Met of newly synthesized proteins. Requires at least a dipeptide for an efficient rate of reaction. N-terminal L-methionine is a prerequisite for activity but the enzyme has broad specificity at other positions. This Teredinibacter turnerae (strain ATCC 39867 / T7901) protein is Peptide deformylase.